The sequence spans 360 residues: Photosystem II protein D1 3 (360 aa).

3 helical membrane-spanning segments follow: residues 29 to 46 (YVGW…TAAI), 118 to 133 (HFLI…QWEL), and 142 to 156 (WIPV…AATA). Residue His118 coordinates chlorophyll a. Tyr126 lines the pheophytin a pocket. [CaMn4O5] cluster is bound by residues Asp170 and Glu189. A helical transmembrane segment spans residues 197 to 218 (FHMIGVAGVFGGALFSAMHGSL). His198 is a binding site for chlorophyll a. A quinone contacts are provided by residues His215 and 264–265 (SF). Residue His215 coordinates Fe cation. Residue His272 participates in Fe cation binding. The chain crosses the membrane as a helical span at residues 274 to 288 (FLAAWPVIGIWFAAL). The [CaMn4O5] cluster site is built by His332, Glu333, Asp342, and Ala344. The propeptide occupies 345–360 (SGEVQPIALTAPAIAS).

It belongs to the reaction center PufL/M/PsbA/D family. PSII is composed of 1 copy each of membrane proteins PsbA, PsbB, PsbC, PsbD, PsbE, PsbF, PsbH, PsbI, PsbJ, PsbK, PsbL, PsbM, PsbT, PsbX, PsbY, PsbZ, Psb30/Ycf12, peripheral proteins PsbO, CyanoQ (PsbQ), PsbU, PsbV and a large number of cofactors. It forms dimeric complexes. Requires The D1/D2 heterodimer binds P680, chlorophylls that are the primary electron donor of PSII, and subsequent electron acceptors. It shares a non-heme iron and each subunit binds pheophytin, quinone, additional chlorophylls, carotenoids and lipids. D1 provides most of the ligands for the Mn4-Ca-O5 cluster of the oxygen-evolving complex (OEC). There is also a Cl(-1) ion associated with D1 and D2, which is required for oxygen evolution. The PSII complex binds additional chlorophylls, carotenoids and specific lipids. as cofactor. In terms of processing, tyr-161 forms a radical intermediate that is referred to as redox-active TyrZ, YZ or Y-Z. Post-translationally, C-terminally processed by CtpA; processing is essential to allow assembly of the oxygen-evolving complex and thus photosynthetic growth.

It is found in the cellular thylakoid membrane. It carries out the reaction 2 a plastoquinone + 4 hnu + 2 H2O = 2 a plastoquinol + O2. Functionally, photosystem II (PSII) is a light-driven water:plastoquinone oxidoreductase that uses light energy to abstract electrons from H(2)O, generating O(2) and a proton gradient subsequently used for ATP formation. It consists of a core antenna complex that captures photons, and an electron transfer chain that converts photonic excitation into a charge separation. The D1/D2 (PsbA/PsbD) reaction center heterodimer binds P680, the primary electron donor of PSII as well as several subsequent electron acceptors. In Nostoc sp. (strain PCC 7120 / SAG 25.82 / UTEX 2576), this protein is Photosystem II protein D1 3.